The chain runs to 267 residues: Phosphate import ATP-binding protein PstB 2 (267 aa).

The ABC transporter domain maps to 21–262; sequence LSTKDVHVYY…AKLQSTNDYV (242 aa). 53-60 contacts ATP; sequence GPSGSGKS.

This sequence belongs to the ABC transporter superfamily. Phosphate importer (TC 3.A.1.7) family. In terms of assembly, the complex is composed of two ATP-binding proteins (PstB), two transmembrane proteins (PstC and PstA) and a solute-binding protein (PstS).

It localises to the cell membrane. The catalysed reaction is phosphate(out) + ATP + H2O = ADP + 2 phosphate(in) + H(+). Part of the ABC transporter complex PstSACB involved in phosphate import. Responsible for energy coupling to the transport system. This chain is Phosphate import ATP-binding protein PstB 2, found in Streptococcus pneumoniae serotype 4 (strain ATCC BAA-334 / TIGR4).